A 249-amino-acid polypeptide reads, in one-letter code: uncharacterized protein (249 aa).

It localises to the cytoplasm. It is found in the nucleus. The protein resides in the nucleolus. This is an uncharacterized protein from Schizosaccharomyces pombe (strain 972 / ATCC 24843) (Fission yeast).